Reading from the N-terminus, the 442-residue chain is MPLPIFPSRLQCSSSSSSSSSRSSFFRPKLRIDPSLTLIPGLSNDVGRLILSFVPYPHISRIKSTCKSWYAFLSSKTLISLRHSRDNSNTNNLSHLLCIFPQDPSISPPFLFDPVTLSWRSLPLMPCNPHVYGLCNFVAVALGPYVYVLGGSAFDTRSYPLDVPLPTSSVFRYSFVKSVWERLSPMMSPRGSFACAAMPGSCGRIIVAGGGSRHTLFGAAGSRMSSVEMYDVEKDEWRVMNELPRFRAGCVGFLVENEKEKEKEEEGREFWVMGGYGGSRTVSGILPVDEYYKDAVVMDLRVDGGEKWRVVGDMWGEEERPKLGKIVAVDCGKPVFFMLDKDWILRYEMGLNRWRKESSVPKKAHYDKPVGFVALNGELHVMILLDGYNLMDTRHTRQQRKAGSLMIHMYDPKKKTWRSVVSKPPFNHQLDFRTTVMCTIRL.

The F-box domain maps to 37 to 84 (TLIPGLSNDVGRLILSFVPYPHISRIKSTCKSWYAFLSSKTLISLRHS). Kelch repeat units follow at residues 93-139 (LSHL…NFVA), 145-200 (YVYV…AMPG), 204-257 (RIIV…LVEN), 269-328 (EFWV…KIVA), 330-377 (DCGK…ALNG), and 390-437 (LMDT…TTVM).

This Arabidopsis thaliana (Mouse-ear cress) protein is F-box/kelch-repeat protein OR23 (OR23).